The chain runs to 296 residues: Nucleotide-binding protein spyM18_0713 (296 aa).

ATP is bound at residue 13-20 (GMSGAGKT). Residue 63–66 (DMRS) coordinates GTP.

Belongs to the RapZ-like family.

Functionally, displays ATPase and GTPase activities. The chain is Nucleotide-binding protein spyM18_0713 from Streptococcus pyogenes serotype M18 (strain MGAS8232).